A 339-amino-acid chain; its full sequence is Deubiquitinase and deneddylase Dub2 (339 aa).

The helical transmembrane segment at 36-56 (IIIALFLIVISCGLILCAYTF) threads the bilayer. Active-site residues include H203, D220, and C282.

Belongs to the peptidase C48 family.

The protein resides in the secreted. Its subcellular location is the host cell. It localises to the membrane. Functionally, effector proteins function to alter host cell physiology and promote bacterial survival in host tissues. This protease possesses deubiquitinating and deneddylating activities. This Chlamydia trachomatis serovar L2 (strain ATCC VR-902B / DSM 19102 / 434/Bu) protein is Deubiquitinase and deneddylase Dub2 (cdu2).